We begin with the raw amino-acid sequence, 276 residues long: Large ribosomal subunit protein uL2 (276 aa).

2 disordered regions span residues 35 to 55 and 222 to 276; these read APLH…RHQG and GSVM…RRKK. Residues 258–276 show a composition bias toward basic residues; the sequence is KTRKKNKHSDKYIVRRRKK.

This sequence belongs to the universal ribosomal protein uL2 family. As to quaternary structure, part of the 50S ribosomal subunit. Forms a bridge to the 30S subunit in the 70S ribosome.

In terms of biological role, one of the primary rRNA binding proteins. Required for association of the 30S and 50S subunits to form the 70S ribosome, for tRNA binding and peptide bond formation. It has been suggested to have peptidyltransferase activity; this is somewhat controversial. Makes several contacts with the 16S rRNA in the 70S ribosome. In Shouchella clausii (strain KSM-K16) (Alkalihalobacillus clausii), this protein is Large ribosomal subunit protein uL2.